A 285-amino-acid chain; its full sequence is Sulfotransferase 2A1 (285 aa).

The 3'-phosphoadenylyl sulfate site is built by K44, S45, G46, T47, N48, and W49. H99 (proton acceptor) is an active-site residue. Positions 121, 129, 184, 218, 223, 247, 248, and 249 each coordinate 3'-phosphoadenylyl sulfate. Phosphoserine is present on S251.

The protein belongs to the sulfotransferase 1 family. In terms of assembly, homodimer. Post-translationally, the N-terminus is blocked. In terms of tissue distribution, liver, adrenal and at lower level in the kidney. Is present in human fetus in higher level in the adrenal than the liver and the kidney.

The protein resides in the cytoplasm. It carries out the reaction an alcohol + 3'-phosphoadenylyl sulfate = an alkyl sulfate + adenosine 3',5'-bisphosphate + H(+). It catalyses the reaction (24S)-hydroxycholesterol + 3'-phosphoadenylyl sulfate = (24S)-hydroxycholesterol 24-sulfate + adenosine 3',5'-bisphosphate + H(+). The enzyme catalyses (24S)-hydroxycholesterol + 3'-phosphoadenylyl sulfate = (24S)-hydroxycholesterol 3-sulfate + adenosine 3',5'-bisphosphate + H(+). The catalysed reaction is (24S)-hydroxycholesterol 24-sulfate + 3'-phosphoadenylyl sulfate = (24S)-hydroxycholesterol 3,24-disulfate + adenosine 3',5'-bisphosphate + H(+). It carries out the reaction 3beta-hydroxyandrost-5-en-17-one + 3'-phosphoadenylyl sulfate = dehydroepiandrosterone 3-sulfate + adenosine 3',5'-bisphosphate + H(+). It catalyses the reaction pregnenolone + 3'-phosphoadenylyl sulfate = pregnenolone sulfate + adenosine 3',5'-bisphosphate + H(+). The enzyme catalyses androsterone + 3'-phosphoadenylyl sulfate = androsterone 3alpha-sulfate + adenosine 3',5'-bisphosphate + H(+). The catalysed reaction is taurolithocholate + 3'-phosphoadenylyl sulfate = taurolithocholate 3-sulfate + adenosine 3',5'-bisphosphate + H(+). It carries out the reaction lithocholate + 3'-phosphoadenylyl sulfate = lithocholate sulfate + adenosine 3',5'-bisphosphate + H(+). Subject to substrate inhibition. Alternate orientations for binding of steroid substrates to SULT2A1 may play a role in substrate inhibition. Functionally, sulfotransferase that utilizes 3'-phospho-5'-adenylyl sulfate (PAPS) as sulfonate donor to catalyze the sulfonation of steroids and bile acids in the liver and adrenal glands. Mediates the sulfation of a wide range of steroids and sterols, including pregnenolone, androsterone, DHEA, bile acids, cholesterol and as well many xenobiotics that contain alcohol and phenol functional groups. Sulfonation increases the water solubility of most compounds, and therefore their renal excretion, but it can also result in bioactivation to form active metabolites. Plays an important role in maintening steroid and lipid homeostasis. Plays a key role in bile acid metabolism. In addition, catalyzes the metabolic activation of potent carcinogenic polycyclic arylmethanols. In Homo sapiens (Human), this protein is Sulfotransferase 2A1 (SULT2A1).